A 131-amino-acid chain; its full sequence is uncharacterized protein (131 aa).

The next 2 helical transmembrane spans lie at 52–72 (LIMIGIIELSYFISLGGFYLV) and 97–117 (SDIISIFCSIAFVLFCIYDVG).

The protein localises to the membrane. This is an uncharacterized protein from Acanthamoeba polyphaga mimivirus (APMV).